We begin with the raw amino-acid sequence, 367 residues long: Histidinol-phosphate aminotransferase (367 aa).

Lys222 is subject to N6-(pyridoxal phosphate)lysine.

Belongs to the class-II pyridoxal-phosphate-dependent aminotransferase family. Histidinol-phosphate aminotransferase subfamily. Pyridoxal 5'-phosphate serves as cofactor.

It carries out the reaction L-histidinol phosphate + 2-oxoglutarate = 3-(imidazol-4-yl)-2-oxopropyl phosphate + L-glutamate. Its pathway is amino-acid biosynthesis; L-histidine biosynthesis; L-histidine from 5-phospho-alpha-D-ribose 1-diphosphate: step 7/9. This Methanosphaera stadtmanae (strain ATCC 43021 / DSM 3091 / JCM 11832 / MCB-3) protein is Histidinol-phosphate aminotransferase.